The primary structure comprises 350 residues: Ion-translocating oxidoreductase complex subunit D (350 aa).

Helical transmembrane passes span 36-56 (CYFF…IAVA), 89-109 (IPAL…ILVV), and 124-144 (AMAA…TWVA). T185 bears the FMN phosphoryl threonine mark. 5 helical membrane-spanning segments follow: residues 212-232 (GFGI…LVML), 239-259 (WQIS…GYLL), 265-285 (MGPL…FIAT), 298-318 (LIFG…CGYP), and 319-339 (DAFA…DYYV).

Belongs to the NqrB/RnfD family. The complex is composed of six subunits: RnfA, RnfB, RnfC, RnfD, RnfE and RnfG. FMN serves as cofactor.

The protein resides in the cell inner membrane. Its function is as follows. Part of a membrane-bound complex that couples electron transfer with translocation of ions across the membrane. This is Ion-translocating oxidoreductase complex subunit D from Shewanella loihica (strain ATCC BAA-1088 / PV-4).